A 122-amino-acid chain; its full sequence is MKIILFLTLIVFTSCELYHYQECVRGTTVLLKEPCPSGTYEGNSPFHPLADNKFALTCTSTHFAFACADGTRHTYQLRARSVSPKLFIRQEEVQQELYSPLFLIVAALVFLILCFTIKRKTE.

The first 15 residues, 1 to 15, serve as a signal peptide directing secretion; it reads MKIILFLTLIVFTSC. In terms of domain architecture, X4e spans 16-81; that stretch reads ELYHYQECVR…RHTYQLRARS (66 aa). Over 16-96 the chain is Virion surface; sequence ELYHYQECVR…FIRQEEVQQE (81 aa). Intrachain disulfides connect C23–C58 and C35–C67. A helical transmembrane segment spans residues 97–117; the sequence is LYSPLFLIVAALVFLILCFTI. Topologically, residues 118-122 are intravirion; that stretch reads KRKTE. The Di-lysine motif signature appears at 118–122; sequence KRKTE.

As to quaternary structure, interacts with the spike glycoprotein. Interacts with M protein. Interacts with E protein. Interacts with the ORF3a protein. Interacts with human SGT. Interacts with host ITGAL. Interacts with host BST2.

The protein resides in the virion. It localises to the host endoplasmic reticulum membrane. The protein localises to the host endoplasmic reticulum-Golgi intermediate compartment membrane. Its subcellular location is the host Golgi apparatus membrane. Its function is as follows. Plays a role as antagonist of host tetherin (BST2), disrupting its antiviral effect. Acts by binding to BST2 thereby interfering with its glycosylation. May suppress small interfering RNA (siRNA). May bind to host ITGAL, thereby playing a role in attachment or modulation of leukocytes. The protein is ORF7a protein of Severe acute respiratory syndrome coronavirus (SARS-CoV).